The chain runs to 274 residues: Protein YeeZ (274 aa).

The N-terminal stretch at 1-24 is a signal peptide; it reads MKKVAIVGLGWLGMPLAMSLSARG. 170 to 177 serves as a coordination point for ATP; that stretch reads GRFFAGKT.

This chain is Protein YeeZ (yeeZ), found in Escherichia coli O157:H7.